The sequence spans 405 residues: Formate-dependent phosphoribosylglycinamide formyltransferase (405 aa).

Residues 22 to 23 (EL) and E82 each bind N(1)-(5-phospho-beta-D-ribosyl)glycinamide. ATP contacts are provided by residues R115, K162, 167 to 172 (SSGKGQ), 202 to 205 (EGFI), and E210. The 201-residue stretch at 120-320 (RLAAETLGLP…EFELHARAIL (201 aa)) folds into the ATP-grasp domain. Residues E279 and E291 each coordinate Mg(2+). N(1)-(5-phospho-beta-D-ribosyl)glycinamide-binding positions include D298, K367, and 374–375 (RR).

Belongs to the PurK/PurT family. Homodimer.

It carries out the reaction N(1)-(5-phospho-beta-D-ribosyl)glycinamide + formate + ATP = N(2)-formyl-N(1)-(5-phospho-beta-D-ribosyl)glycinamide + ADP + phosphate + H(+). It functions in the pathway purine metabolism; IMP biosynthesis via de novo pathway; N(2)-formyl-N(1)-(5-phospho-D-ribosyl)glycinamide from N(1)-(5-phospho-D-ribosyl)glycinamide (formate route): step 1/1. Its function is as follows. Involved in the de novo purine biosynthesis. Catalyzes the transfer of formate to 5-phospho-ribosyl-glycinamide (GAR), producing 5-phospho-ribosyl-N-formylglycinamide (FGAR). Formate is provided by PurU via hydrolysis of 10-formyl-tetrahydrofolate. This chain is Formate-dependent phosphoribosylglycinamide formyltransferase, found in Leptothrix cholodnii (strain ATCC 51168 / LMG 8142 / SP-6) (Leptothrix discophora (strain SP-6)).